The primary structure comprises 111 residues: Complement inhibitor CirpT1 (111 aa).

The first 19 residues, 1-19 (MATLIAARTKRKAPRVRIF), serve as a signal peptide directing secretion. Disulfide bonds link cysteine 40–cysteine 64, cysteine 59–cysteine 98, cysteine 76–cysteine 99, and cysteine 85–cysteine 104.

The protein belongs to the CirpT family. Expressed in salivary glands.

The protein localises to the secreted. Complement inhibitor. Prevents complement-mediated activation of C5 by sterically preventing direct binding of C5 to its convertase (binding with domains MG4 and MG5). Binds C5 at a different binding site than the other tick complement inhibitors OmCI and RaCI3, and the drug eculizumab. Inhibits the complement in human, rat and guinea pig, and also shows a reduced inhibition in rabbit and pig. This is Complement inhibitor CirpT1 from Rhipicephalus pulchellus (Yellow backed tick).